The primary structure comprises 411 residues: Ribose-phosphate pyrophosphokinase 3, chloroplastic (411 aa).

Residues 1-39 (MAAISPANATTAASLSLPQFSSTSSSLSSSSSPSFLNFK) constitute a chloroplast transit peptide. Positions 231 and 233 each coordinate Mg(2+). The segment at 314-329 (GRHVVIVDDLVQSGGT) is binding of phosphoribosylpyrophosphate.

Belongs to the ribose-phosphate pyrophosphokinase family.

Its subcellular location is the plastid. It localises to the chloroplast. The enzyme catalyses D-ribose 5-phosphate + ATP = 5-phospho-alpha-D-ribose 1-diphosphate + AMP + H(+). The chain is Ribose-phosphate pyrophosphokinase 3, chloroplastic (PRS3) from Arabidopsis thaliana (Mouse-ear cress).